Consider the following 350-residue polypeptide: Putative transport protein YdbI (350 aa).

8 helical membrane passes run 18 to 38 (IFVV…LILL), 67 to 87 (VVIT…GFVF), 145 to 165 (ISTF…FLFE), 207 to 227 (FIIA…MHFP), 229 to 249 (LFGL…GVVI), 257 to 277 (IAYS…IFAI), 289 to 309 (LMSA…IFSE), and 311 to 331 (FFGI…LDIL).

It belongs to the autoinducer-2 exporter (AI-2E) (TC 2.A.86) family.

The protein localises to the cell membrane. This Bacillus subtilis (strain 168) protein is Putative transport protein YdbI (ydbI).